A 1491-amino-acid chain; its full sequence is MIERGKYQSLTMINWNGFFARTFDIDNLVTTLSGGNGAGKSTTMAAFITALIPDQSLLHFRNTTEAGSSQASRDKGLYGKLQAGACYAALDVVNSRNQRLLFAVKLQQVAGRDKKVDIKPFLIQGLPSHVKPTDVLVETVSDKHARVRQINEVKDAVGQIEGAHFKSFPSIVDYHAQMFEFGVIPKKLRNSSDRSKFYRLIEASLYGGISSAITRSLRDYLLPQNGGVKKAFQDMESALRENRMTLEAIKTTQADRDLFKHLITESTNYVAADYMRHANDRRNKVGQTLVLRGELFSSRETLIEQNSLLNRVHEELELLVEQESALEQDYQGASDHLQLVQNALRQQEKIERYQEDLEELNFRLEEQMMVVEEANERVMMAEERATISEEEVDSLKSQLADYQQALDVQQTRALQYQQAVQALDKARRLLDKPELTAESAQALATQLKAEQETRTSELLALKHKLDMSSAAAQQFNHAFDLVKRVLGEVARSEASKQAQQVIRQAREAQNVLQNEAQWQAQQRDLERQLEQQRSVRELATQYHKQHMVALDDAATVELERERHSALLEELETEQENCREQRGQLRHQEQELQTQIARFESIAPAWIKANDALETLREQSGAELADSQSVMAHMQQVLELEKAQSMAKDKLAERRAKLDSEIERLASPGGSNDPRLKGLADTLGGVLLSEIYDDITIDDAPYFSAMYGPARHAIVVSDLSGIKEKLVELDDCPEDLYLIEGDVDAFDDSSFNAEELEGAVCVQLNQRQMRYSRFPAIPLFGRAAREQRLELLREERDDVVEQHAKASFDSQKLQRLYASFNQFVAMHLQVAFDADPEQALANARDKRNQLLRSISEFEAQEQQLRSQLQASKQALAALDKLAPQMGLLDEETLEARYQELEEKLQQLSEAKAFIAAHGRTISELEKVAAVLDADPEQFDALEQQYQQADQALQQLKAQIFALSDLLERRHHFAYSDSVDLLNQSSELSEQLKAKLVQAESERTRSREELKQAQAQLSQYNQLLASLKSSHQAKLETVQEFKQELQEFGVHADEGAIERAQRRRDELQERLHTSRSRKSEYERTITSTELEMKALVKRMKKVEKDYQDLRTFVVNAKAGWCSVLRLARQNDVERRLHKRELAYLSADELRSMSDKSLGALRLAVANNEDLRDALRQSEDNSRPERKVLFYIAVYQHLRERIRQDIIRTDDPVEAIEEMEVELARLTEELTQREQRLAISSDSVASIIRKTIQREQNRIRMLNQGLSNISFGQVNGVRLNVKVRESHEILLAGLSEQQAQHKDLFESARYTFSEAMAKLFQRVNPHIDMGQRSPQVLGEELLDYRNYLELSVEVNRGSDGWLQAESGALSTGEAIGTGQSILLMVVQSWEEESRRLRSKDIVPCRLLFLDEAARLDAKSIATLFELCERLDMQLLIAAPENISPEKGTTYKLVRKVFKDHEHVHVVGLRGFAQTEKPKTAEQKFAEELAGELTE.

Residue 34–41 (GGNGAGKS) participates in ATP binding. 6 coiled-coil regions span residues 302–418 (LIEQ…QYQQ), 488–600 (EVAR…RFES), 638–666 (ELEKAQSMAKDKLAERRAKLDSEIERLAS), 781–806 (RAAREQRLELLREERDDVVEQHAKAS), 836–1109 (EQAL…DLRT), and 1210–1239 (VEAIEEMEVELARLTEELTQREQRLAISSD). The flexible hinge stretch occupies residues 667-784 (PGGSNDPRLK…AIPLFGRAAR (118 aa)). A disordered region spans residues 1059-1080 (QRRRDELQERLHTSRSRKSEYE).

It belongs to the SMC family. MukB subfamily. As to quaternary structure, homodimerization via its hinge domain. Binds to DNA via its C-terminal region. Interacts, and probably forms a ternary complex, with MukE and MukF via its C-terminal region. The complex formation is stimulated by calcium or magnesium. Interacts with tubulin-related protein FtsZ.

Its subcellular location is the cytoplasm. The protein resides in the nucleoid. Plays a central role in chromosome condensation, segregation and cell cycle progression. Functions as a homodimer, which is essential for chromosome partition. Involved in negative DNA supercoiling in vivo, and by this means organize and compact chromosomes. May achieve or facilitate chromosome segregation by condensation DNA from both sides of a centrally located replisome during cell division. The chain is Chromosome partition protein MukB from Vibrio cholerae serotype O1 (strain ATCC 39541 / Classical Ogawa 395 / O395).